A 326-amino-acid polypeptide reads, in one-letter code: MVDYYEVLGVQKHASAEDIKKAYRKLALKWHPDKNPENKEEAEQQFKQVAEAYEVLSDAKKRDIYDRFGKEGLINGGGGGSHHDNPFEFGFTFRNPDDVFREFFGGRDPFSFDFFEDPFEDFFGGRRGPRGSRSRAGGSFLSAFGGFPAFGNAFPSFDTGFTSFGSLGHGGLTSFSSTSFGGSGMGNFKSVSTSTKIVNGRKITTKRIVENGQERVEVEEDGQLRSLTINGEANEEAFAEECRRRGQHALPFQPTNTRLLKPHKPASSPRYAYHYNSDEVEEQEKSRVASSLETPFYLSGYKEGSKRRKQKQREEQKKKKSTKGSY.

Positions 3–69 (DYYEVLGVQK…KKRDIYDRFG (67 aa)) constitute a J domain. The segment at 249 to 326 (ALPFQPTNTR…KKKKSTKGSY (78 aa)) is disordered. Ser277 is modified (phosphoserine).

Homooligomer.

The protein resides in the cytoplasm. The protein localises to the perinuclear region. It is found in the nucleus. Functionally, has a stimulatory effect on the ATPase activity of HSP70 in a dose-dependent and time-dependent manner and hence acts as a co-chaperone of HSP70. Plays an indispensable role in the organization of KRT8/KRT18 filaments. Acts as an endogenous molecular chaperone for neuronal proteins including huntingtin. Suppresses aggregation and toxicity of polyglutamine-containing, aggregation-prone proteins. Also reduces cellular toxicity and caspase-3 activity. This is DnaJ homolog subfamily B member 6 from Gallus gallus (Chicken).